The following is a 73-amino-acid chain: Translation initiation factor IF-1 (73 aa).

An S1-like domain is found at 1-73 (MAKKDGVIEI…TRGRIVYRYK (73 aa)).

Belongs to the IF-1 family. Component of the 30S ribosomal translation pre-initiation complex which assembles on the 30S ribosome in the order IF-2 and IF-3, IF-1 and N-formylmethionyl-tRNA(fMet); mRNA recruitment can occur at any time during PIC assembly.

The protein resides in the cytoplasm. In terms of biological role, one of the essential components for the initiation of protein synthesis. Stabilizes the binding of IF-2 and IF-3 on the 30S subunit to which N-formylmethionyl-tRNA(fMet) subsequently binds. Helps modulate mRNA selection, yielding the 30S pre-initiation complex (PIC). Upon addition of the 50S ribosomal subunit IF-1, IF-2 and IF-3 are released leaving the mature 70S translation initiation complex. The polypeptide is Translation initiation factor IF-1 (Clavibacter michiganensis subsp. michiganensis (strain NCPPB 382)).